A 1302-amino-acid polypeptide reads, in one-letter code: Multidrug resistance protein homolog 65 (1302 aa).

The disordered stretch occupies residues 1 to 23 (MERDEVSTSSSEGKSQEEAPMAE). Over 1–48 (MERDEVSTSSSEGKSQEEAPMAEGLEPTEPIAFLKLFRFSTYGEIGWL) the chain is Cytoplasmic. In terms of domain architecture, ABC transmembrane type-1 1 spans 48–369 (LFFGFIMCCI…TAPFLESFAT (322 aa)). The chain crosses the membrane as a helical span at residues 49–69 (FFGFIMCCIKALTLPAVVIIY). Residues 70-118 (SEFTSMLVDRAMQFGTSSNVHALPLFGGGKTLTNASREENNEALYDDSI) lie on the Extracellular side of the membrane. Residue asparagine 103 is glycosylated (N-linked (GlcNAc...) asparagine). The helical transmembrane segment at 119-147 (SYGILLTIASVVMFISGIFSVDVFNMVAL) threads the bilayer. Residues 148 to 194 (RQVTRMRIKLFSSVIRQDIGWHDLASKQNFTQSMVDDVEKIRDGISE) lie on the Cytoplasmic side of the membrane. A helical membrane pass occupies residues 195–215 (KVGHFVYLVVGFIITVAISFS). The Extracellular segment spans residues 216–223 (YGWKLTLA). The helical transmembrane segment at 224 to 242 (VSSYIPLVILLNYYVAKFQ) threads the bilayer. Residues 243–302 (GKLTAREQESYAGAGNLAEEILSSIRTVVSFGGEKSEVQRYENFLVPARKASQWKGAFSG) are Cytoplasmic-facing. A helical membrane pass occupies residues 303–323 (LSDAVLKSMLYLSCAGAFWYG). At 324-341 (VNLIIDDRNVENKEYTPA) the chain is on the extracellular side. A helical membrane pass occupies residues 342–362 (ILMIAFFGIIVGADNIARTAP). Residues 363–731 (FLESFATARG…LQLAKQEWCY (369 aa)) are Cytoplasmic-facing. Residues 405-641 (VEFQDVFFRY…EGAYYNMVRA (237 aa)) enclose the ABC transporter 1 domain. 440-447 (GSSGCGKS) contacts ATP. Residues 732–753 (LILGTISAVAVGFLYPAFAVIF) form a helical membrane-spanning segment. Residues 732–1020 (LILGTISAVA…SLAFTPAFSA (289 aa)) form the ABC transmembrane type-1 2 domain. Residues 754-776 (GEFYAALAEKDPEDALRRTAVLS) lie on the Extracellular side of the membrane. A helical transmembrane segment spans residues 777–798 (WACLGLAFLTGLVCFLQTYLFN). Over 799 to 852 (YAGIWLTTRMRAMTFNAMVNQEVGWFDDENNSVGALSARLSGEAVDIQGAIGYP) the chain is Cytoplasmic. Residues 853–873 (LSGMIQALSNFISSVSVAMYY) traverse the membrane as a helical segment. A topological domain (extracellular) is located at residue asparagine 874. A helical membrane pass occupies residues 875 to 894 (WKLALLCLANCPIIVGSVIL). Over 895-956 (EAKMMSNAVV…VEVLIRQKLR (62 aa)) the chain is Cytoplasmic. The helical transmembrane segment at 957–977 (WRGVLNSTMQASAFFAYAVAL) threads the bilayer. Topologically, residues 978–993 (CYGGVLVSEGQLPFQD) are extracellular. A helical membrane pass occupies residues 994 to 1014 (IIKVSETLLYGSMMLAQSLAF). At 1015–1302 (TPAFSAALIA…AKLHKTQKDH (288 aa)) the chain is on the cytoplasmic side. The 240-residue stretch at 1059-1298 (VRYRGIQFRY…GGIYAKLHKT (240 aa)) folds into the ABC transporter 2 domain. 1094-1101 (GHSGCGKS) contacts ATP.

It belongs to the ABC transporter superfamily. ABCB family. Multidrug resistance exporter (TC 3.A.1.201) subfamily.

Its subcellular location is the membrane. The enzyme catalyses ATP + H2O + xenobioticSide 1 = ADP + phosphate + xenobioticSide 2.. The polypeptide is Multidrug resistance protein homolog 65 (Mdr65) (Drosophila melanogaster (Fruit fly)).